A 512-amino-acid chain; its full sequence is Cytochrome P450 72A15 (512 aa).

A helical transmembrane segment spans residues 2 to 22; it reads EISVASVTISVVLAVVSWWIW. Cys-460 serves as a coordination point for heme.

This sequence belongs to the cytochrome P450 family. The cofactor is heme.

It localises to the membrane. This is Cytochrome P450 72A15 (CYP72A15) from Arabidopsis thaliana (Mouse-ear cress).